Here is a 240-residue protein sequence, read N- to C-terminus: NADH-quinone oxidoreductase subunit I 2 (240 aa).

2 consecutive 4Fe-4S ferredoxin-type domains span residues 57 to 86 (TDLRTGEYKCTSCMQCAQACPVNVITIEWH) and 97 to 126 (DRFAIDMSRCMLCNFCVEACPFDSLVMGYD). Cysteine 66, cysteine 69, cysteine 72, cysteine 76, cysteine 106, cysteine 109, cysteine 112, and cysteine 116 together coordinate [4Fe-4S] cluster. Positions 185–240 (IHGYLGRPPLPKGYEPELKPQFRKPAEEAAEAQQAEAAGQPAAEPGKTNGEEAGQP) are disordered. Positions 198–211 (YEPELKPQFRKPAE) are enriched in basic and acidic residues. Positions 215–230 (EAQQAEAAGQPAAEPG) are enriched in low complexity.

It belongs to the complex I 23 kDa subunit family. In terms of assembly, NDH-1 is composed of 14 different subunits. Subunits NuoA, H, J, K, L, M, N constitute the membrane sector of the complex. [4Fe-4S] cluster serves as cofactor.

The protein resides in the cell membrane. It catalyses the reaction a quinone + NADH + 5 H(+)(in) = a quinol + NAD(+) + 4 H(+)(out). NDH-1 shuttles electrons from NADH, via FMN and iron-sulfur (Fe-S) centers, to quinones in the respiratory chain. The immediate electron acceptor for the enzyme in this species is believed to be ubiquinone. Couples the redox reaction to proton translocation (for every two electrons transferred, four hydrogen ions are translocated across the cytoplasmic membrane), and thus conserves the redox energy in a proton gradient. This Symbiobacterium thermophilum (strain DSM 24528 / JCM 14929 / IAM 14863 / T) protein is NADH-quinone oxidoreductase subunit I 2.